We begin with the raw amino-acid sequence, 152 residues long: Protein D1 (152 aa).

This sequence belongs to the phosphatidylethanolamine-binding protein family.

This is Protein D1 (D1) from Onchocerca volvulus.